A 470-amino-acid polypeptide reads, in one-letter code: MTPFMTEDFLLDTEFARRLYHDYAKDQPIFDYHCHLPPQQIAEDYRFKNLYDIWLKGDHYKWRAMRTNGVAERLCTGDASDREKFDAWAATVPHTIGNPLYHWTHLELRRPFGITGKLLSPSTADEIWNECNELLAQDNFSARGIMQQMNVKMVGTTDDPIDSLEHHAEIAKDGSFTIKVLPSWRPDKAFNIEQATFNDYMAKLGEVSDTDIRRFADLQTALTKRLDHFAAHGCKVSDHALDVVMFAEANEAELDSILARRLAGETLSEHEVAQFKTAVLVFLGAEYARRGWVQQYHIGALRNNNLRQFKLLGPDVGFDSINDRPMAEELSKLLSKQNEENLLPKTILYCLNPRDNEVLGTMSGNFQGEGMPGKMQFGSGWWFNDQKDGMERQMTQLAQLGLLSRFVGMLTDSRSFLSYTRHEYFRRILCQMIGRWVEAGEAPADINLLGEMVKNICFNNARDYFAIELN.

This sequence belongs to the metallo-dependent hydrolases superfamily. Uronate isomerase family.

The enzyme catalyses D-glucuronate = D-fructuronate. It catalyses the reaction aldehydo-D-galacturonate = keto-D-tagaturonate. Its pathway is carbohydrate metabolism; pentose and glucuronate interconversion. This is Uronate isomerase from Escherichia coli O157:H7 (strain EC4115 / EHEC).